The following is a 499-amino-acid chain: Glycerol kinase (499 aa).

Thr13 is a binding site for ADP. Thr13, Thr14, and Ser15 together coordinate ATP. Thr13 lines the sn-glycerol 3-phosphate pocket. Arg17 contacts ADP. Sn-glycerol 3-phosphate is bound by residues Arg83, Glu84, Tyr135, and Asp245. Glycerol-binding residues include Arg83, Glu84, Tyr135, Asp245, and Gln246. ADP is bound by residues Thr267 and Gly310. 4 residues coordinate ATP: Thr267, Gly310, Gln314, and Gly411. Positions 411 and 415 each coordinate ADP.

Belongs to the FGGY kinase family.

It catalyses the reaction glycerol + ATP = sn-glycerol 3-phosphate + ADP + H(+). It participates in polyol metabolism; glycerol degradation via glycerol kinase pathway; sn-glycerol 3-phosphate from glycerol: step 1/1. Inhibited by fructose 1,6-bisphosphate (FBP). Functionally, key enzyme in the regulation of glycerol uptake and metabolism. Catalyzes the phosphorylation of glycerol to yield sn-glycerol 3-phosphate. The chain is Glycerol kinase from Stenotrophomonas maltophilia (strain K279a).